The sequence spans 173 residues: NADH-quinone oxidoreductase subunit 6 (173 aa).

Residues Cys53, Cys54, Cys118, and Cys148 each contribute to the [4Fe-4S] cluster site.

This sequence belongs to the complex I 20 kDa subunit family. NDH-1 is composed of at least 14 different subunits, Nqo1 to Nqo14. The complex has a L-shaped structure, with the hydrophobic arm (subunits Nqo7, Nqo8, Nqo10 to Nqo14) embedded in the inner membrane and the hydrophilic peripheral arm (subunits Nqo1 to Nqo6, Nqo9) protruding into the bacterial cytoplasm. The hydrophilic domain contains all the redox centers. The cofactor is [4Fe-4S] cluster.

The protein localises to the cell inner membrane. It carries out the reaction a quinone + NADH + 5 H(+)(in) = a quinol + NAD(+) + 4 H(+)(out). NDH-1 shuttles electrons from NADH, via FMN and iron-sulfur (Fe-S) centers, to quinones in the respiratory chain. The immediate electron acceptor for the enzyme in this species is believed to be ubiquinone. Couples the redox reaction to proton translocation (for every two electrons transferred, four hydrogen ions are translocated across the cytoplasmic membrane), and thus conserves the redox energy in a proton gradient. This Paracoccus denitrificans protein is NADH-quinone oxidoreductase subunit 6 (nqo6).